The following is a 364-amino-acid chain: Palmitoyltransferase ZDHHC9 (364 aa).

Over 1-35 the chain is Cytoplasmic; it reads MSVMVVRKKVTRKWEKLPGRNTFCCDGRVMMARQK. A helical membrane pass occupies residues 36-56; the sequence is GIFYLTLFLILGTCTLFFAFE. The Lumenal segment spans residues 57 to 63; the sequence is CRYLAVQ. A helical transmembrane segment spans residues 64 to 84; the sequence is LSPAIPVFAAMLFLFSMATLL. Residues 85–183 lie on the Cytoplasmic side of the membrane; it reads RTSFSDPGVI…NCVGKRNYRY (99 aa). The DHHC domain maps to 139–189; the sequence is KYCYTCKIFRPPRASHCSICDNCVERFDHHCPWVGNCVGKRNYRYFYLFIL. Residue Cys169 is the S-palmitoyl cysteine intermediate of the active site. A helical membrane pass occupies residues 184–204; it reads FYLFILSLSLLTIYVFAFNIV. The Lumenal segment spans residues 205–228; sequence YVALKSLKIGFLETLKETPGTVLE. A helical transmembrane segment spans residues 229–249; the sequence is VLICFFTLWSVVGLTGFHTFL. At 250–364 the chain is on the cytoplasmic side; that stretch reads VALNQTTNED…PPQEAAEAEK (115 aa). Residues 303 to 364 form a disordered region; sequence PLEESGSRPP…PPQEAAEAEK (62 aa). Residues 310-323 are compositionally biased toward polar residues; the sequence is RPPSTQETSSSLLP. Residues 346–356 are compositionally biased toward pro residues; the sequence is EMPPPEPPEPP.

Belongs to the DHHC palmitoyltransferase family. ERF2/ZDHHC9 subfamily. In terms of assembly, interacts with GOLGA7. Highly expressed in kidney, skeletal muscle, brain, lung and liver. Absent in thymus, spleen and leukocytes.

Its subcellular location is the endoplasmic reticulum membrane. The protein resides in the golgi apparatus membrane. It catalyses the reaction L-cysteinyl-[protein] + hexadecanoyl-CoA = S-hexadecanoyl-L-cysteinyl-[protein] + CoA. Its function is as follows. Palmitoyltransferase that catalyzes the addition of palmitate onto various protein substrates, such as ADRB2, GSDMD, HRAS, NRAS and CGAS. The ZDHHC9-GOLGA7 complex is a palmitoyltransferase specific for HRAS and NRAS. May have a palmitoyltransferase activity toward the beta-2 adrenergic receptor/ADRB2 and therefore regulate G protein-coupled receptor signaling. Acts as a regulator of innate immunity by catalyzing palmitoylation of CGAS, thereby promoting CGAS homodimerization and cyclic GMP-AMP synthase activity. Activates pyroptosis by catalyzing palmitoylation of gasdermin-D (GSDMD), thereby promoting membrane translocation and pore formation of GSDMD. (Microbial infection) Through a sequential action with ZDHHC20, rapidly and efficiently palmitoylates SARS coronavirus-2/SARS-CoV-2 spike protein following its synthesis in the endoplasmic reticulum (ER). In the infected cell, promotes spike biogenesis by protecting it from premature ER degradation, increases half-life and controls the lipid organization of its immediate membrane environment. Once the virus has formed, spike palmitoylation controls fusion with the target cell. This is Palmitoyltransferase ZDHHC9 from Homo sapiens (Human).